The chain runs to 509 residues: Flotillin-like protein FloT (509 aa).

At 1–3 the chain is on the cytoplasmic side; the sequence is MTM. An intramembrane segment occupies 4-24; sequence PIIMIIGVVFFLLIALIAVFI. Residues 25 to 509 are Cytoplasmic-facing; sequence TKYRTAGPDE…KEAKTIQKSE (485 aa). The tract at residues 119-301 is PHB domain; sequence AAEQFLGKSK…KIIERQKQIE (183 aa). Positions 203-509 are required for correct localization; the sequence is RIAQVKRDAD…KEAKTIQKSE (307 aa). Short sequence motifs (EA repeat) lie at residues 342–344, 357–360, 370–373, and 390–394; these read AEA, AEAE, and AEAEA. The segment at 485–509 is not required for correct localization; sequence KGNVKQSINELTNEIKEAKTIQKSE.

It belongs to the band 7/mec-2 family. Flotillin subfamily. In terms of assembly, homooligomerizes. Oligomerizes in very large complexes in vitro. Interacts with FloA, FtsH, FtsX, OppA, SdhA and SecY in detergent-resistant membrane (DRM) fractions. Interacts with FtsH at midcell. Interacts with FloA. Interacts in vivo with KinC, FloA, FtsH and ResE. Interacts with ResE, colocalizes with ResE in FloT-only membrane rafts. Another study shows nearly complete colocalization with NfeD2, but only minor colocalization with FtsH or KinC.

It is found in the cell membrane. The protein localises to the membrane raft. Its function is as follows. Found in functional membrane microdomains (FMM) that may be equivalent to eukaryotic membrane rafts. FMMs are highly dynamic and increase in number as cells age. FloA and FloT function is partially redundant; double deletions have marked synthetic phenotypes. Flotillins are thought to be important factors in membrane fluidity, especially during periods of rapid growth in rich media. Whether specific proteins are associated with FMMs is controversial; in one study FloT rafts have been shown to include proteins involved in adaptation to stationary phase, while FloA-FloT rafts include proteins involved in differentiation including sporulation, biofilm formation and DNA uptake competence. Another (more finely resolved) study only showed association of NfeD2 with FloT rafts of all the proteins examined. Aids homooligomerization of KinC and KinD but not KinB, may prevent incorrect hetero-association of the above kinases. Simultaneous overexpression of both FloA and FloT leads to defects in cell division and differentiation, in part caused by stabilization of FtsH and its subsequent increased ability to degrade proteins. Cells make more biofilm, are about half as long, have less EzrA and more frequent Z-rings. Involved in spatial organization of membranes, perhaps recruiting proteins (e.g. NfeD2) to specific membrane regions. Plays a role in phosphorylation of master regulator Spo0A, an early sporulation event. Plays a non-redundant role with dynamin-like protein A (dynA) in membrane dynamics and cell shape. The polypeptide is Flotillin-like protein FloT (Bacillus subtilis (strain 168)).